The following is a 426-amino-acid chain: Glutamyl-tRNA reductase (426 aa).

Residues 49–52 (TCNR), serine 107, 112–114 (EPQ), and glutamine 118 each bind substrate. The active-site Nucleophile is cysteine 50. 187–192 (GAGETI) contacts NADP(+).

Belongs to the glutamyl-tRNA reductase family. Homodimer.

It carries out the reaction (S)-4-amino-5-oxopentanoate + tRNA(Glu) + NADP(+) = L-glutamyl-tRNA(Glu) + NADPH + H(+). The protein operates within porphyrin-containing compound metabolism; protoporphyrin-IX biosynthesis; 5-aminolevulinate from L-glutamyl-tRNA(Glu): step 1/2. Catalyzes the NADPH-dependent reduction of glutamyl-tRNA(Glu) to glutamate 1-semialdehyde (GSA). The sequence is that of Glutamyl-tRNA reductase from Ectopseudomonas mendocina (strain ymp) (Pseudomonas mendocina).